The primary structure comprises 394 residues: MGCLGNSKTEDQRNEEKAQREANKKIEKQLQKDKQVYRATHRLLLLGAGESGKSTIVKQMRILHVNGFNGEGGEEDPQAARSNSDGEKATKVQDIKNNLKEAIETIVAAMSNLVPPVELANPENQFRVDYILSVMNVPNFDFPPEFYEHAKALWEDEGVRACYERSNEYQLIDCAQYFLDKIDVVKQADYVPSDQDLLRCRVLTSGIFETKFQVDKVNFHMFDVGGQRDERRKWIQCFNDVTAIIFVVASSSYNMVIREDNQTNRLQEALNLFKSIWNNRWLRTISVILFLNKQDLLAEKVLAGKSKIEDYFPEFARYTTPEDATPEPGEDPRVTRAKYFIRDEFLRISTASGDGRHYCYPHFTCAVDTENIRRVFNDCRDIIQRMHLRQYELL.

Positions M1 to N23 are disordered. G2 carries N-palmitoyl glycine lipidation. C3 carries the S-palmitoyl cysteine lipid modification. A compositionally biased stretch (basic and acidic residues) spans K8–N23. The G-alpha domain maps to A39 to L394. The interval R42–T55 is G1 motif. G47–T55 is a GTP binding site. Mg(2+) is bound at residue S54. The tract at residues F68–T90 is disordered. The segment at D196–T204 is G2 motif. Residues L197–T204, D223–Q227, N292–D295, and A366 contribute to the GTP site. T204 serves as a coordination point for Mg(2+). The interval F219–R228 is G3 motif. Residues I288–D295 are G4 motif. The tract at residues T364–T369 is G5 motif.

This sequence belongs to the G-alpha family. G(s) subfamily. In terms of assembly, heterotrimeric G proteins are composed of 3 units; alpha, beta and gamma. The alpha chain contains the guanine nucleotide binding site. Interacts with CRY1; the interaction may block GPCR-mediated regulation of cAMP concentrations. Interacts with ADCY6 and stimulates its adenylyl cyclase activity. Interacts with ADCY2 and ADCY5. Stimulates the ADCY5 adenylyl cyclase activity. Interaction with SASH1.

The protein resides in the cell membrane. Its function is as follows. Guanine nucleotide-binding proteins (G proteins) function as transducers in numerous signaling pathways controlled by G protein-coupled receptors (GPCRs). Signaling involves the activation of adenylyl cyclases, resulting in increased levels of the signaling molecule cAMP. GNAS functions downstream of several GPCRs, including beta-adrenergic receptors. Stimulates the Ras signaling pathway via RAPGEF2. This chain is Guanine nucleotide-binding protein G(s) subunit alpha (GNAS), found in Cricetulus griseus (Chinese hamster).